A 179-amino-acid polypeptide reads, in one-letter code: MRVLGIDPGLANLGLGLVEGDVRRAKHLYHVCLTTESAWLMPRRLQYLHEELTRLLTEYRPDAVAIEDQILRRQADVAFKVGQAFGVVQLACAQAGVPIHAYGPMQVKKSLVGTGRADKEQVIYMVKASLGIRELFNNHAADALALALTHLAHAPMQERSERLAAAGRAARTGDAPLRR.

Residues aspartate 7 and glutamate 67 contribute to the active site. The Mn(2+) site is built by aspartate 7 and glutamate 67. The short motif at 68–74 (DQILRRQ) is the DNA-binding loop element. Residues histidine 139 and aspartate 142 contribute to the active site. Histidine 139 serves as a coordination point for Mn(2+).

Belongs to the RuvC family. As to quaternary structure, homodimer which binds Holliday junction (HJ) DNA. The HJ becomes 2-fold symmetrical on binding to RuvC with unstacked arms; it has a different conformation from HJ DNA in complex with RuvA. In the full resolvosome a probable DNA-RuvA(4)-RuvB(12)-RuvC(2) complex forms which resolves the HJ. The cofactor is Mn(2+).

The protein resides in the cytoplasm. It carries out the reaction Endonucleolytic cleavage at a junction such as a reciprocal single-stranded crossover between two homologous DNA duplexes (Holliday junction).. The RuvA-RuvB-RuvC complex processes Holliday junction (HJ) DNA during genetic recombination and DNA repair. Endonuclease that resolves HJ intermediates. Cleaves cruciform DNA by making single-stranded nicks across the HJ at symmetrical positions within the homologous arms, probably yielding a 5'-phosphate and a 3'-hydroxyl group; requires a central core of homology in the junction. The consensus cleavage sequence is 5'-(G/C)TC(C/G)-3' (a different site than E.coli); cleavage occurs on the 3'-side of the TC dinucleotide at the point of strand exchange. Also resolves nicked HJ intermediates, replication forks and Y-junction DNA in vitro. HJ branch migration catalyzed by RuvA-RuvB allows RuvC to scan DNA until it finds its consensus sequence, where it cleaves and resolves the cruciform DNA. Its function is as follows. Binds HJ DNA independently of homologous core or consensus sequence; Mn(2+) is not essential for binding but improves it, while &gt;1.0 mM Mg(2+) inhibit binding. Also binds Y-junction DNA less well. Requires a homologous core to cleave DNA. Another study shows divalent cations (Mn(2+), Mg(2+) and Ca(2+), tested up to 5.0 mM) improve DNA binding considerably over binding in their absence. In Deinococcus radiodurans (strain ATCC 13939 / DSM 20539 / JCM 16871 / CCUG 27074 / LMG 4051 / NBRC 15346 / NCIMB 9279 / VKM B-1422 / R1), this protein is Crossover junction endodeoxyribonuclease RuvC.